The chain runs to 690 residues: Polyphosphate kinase (690 aa).

N45 contacts ATP. Mg(2+) contacts are provided by R375 and R405. H435 (phosphohistidine intermediate) is an active-site residue. The ATP site is built by Y468, R564, and H592.

This sequence belongs to the polyphosphate kinase 1 (PPK1) family. Mg(2+) serves as cofactor. Post-translationally, an intermediate of this reaction is the autophosphorylated ppk in which a phosphate is covalently linked to a histidine residue through a N-P bond.

The catalysed reaction is [phosphate](n) + ATP = [phosphate](n+1) + ADP. Functionally, catalyzes the reversible transfer of the terminal phosphate of ATP to form a long-chain polyphosphate (polyP). The polypeptide is Polyphosphate kinase (Pseudomonas aeruginosa (strain ATCC 15692 / DSM 22644 / CIP 104116 / JCM 14847 / LMG 12228 / 1C / PRS 101 / PAO1)).